The following is a 174-amino-acid chain: Ly6/PLAUR domain-containing protein 6 (174 aa).

A signal peptide spans 1 to 22; it reads MEPWPLMAWGLMLTAITGWIKA. In terms of domain architecture, UPAR/Ly6 spans 47–141; sequence FKCFTCEDAP…PRNETDAIFS (95 aa). Cystine bridges form between C49–C77, C52–C61, C70–C96, C102–C121, C107–C118, and C122–C127. N-linked (GlcNAc...) asparagine glycans are attached at residues N134 and N147. The GPI-anchor amidated serine moiety is linked to residue S149. Positions 150-174 are cleaved as a propeptide — removed in mature form; sequence AQSTQTLPLLLLSVSITSLMLHSIN.

Interacts with fzd8 and lrp6.

The protein resides in the cell membrane. It localises to the membrane raft. Its function is as follows. Acts as an important regulator of embryogenesis through its enhancement of Wnt/beta-catenin signaling. Positively regulates Wnt/beta-catenin signaling by ensuring phosphorylation of lrp6 specifically in plasma membrane rafts and its subsequent internalization into signaling-competent vesicles. Essential for the wnt8-mediated patterning of the mesoderm and neuroectoderm during gastrulation. The polypeptide is Ly6/PLAUR domain-containing protein 6 (lypd6) (Danio rerio (Zebrafish)).